The chain runs to 241 residues: Pyrroloquinoline-quinone synthase (241 aa).

Belongs to the PqqC family.

It catalyses the reaction 6-(2-amino-2-carboxyethyl)-7,8-dioxo-1,2,3,4,7,8-hexahydroquinoline-2,4-dicarboxylate + 3 O2 = pyrroloquinoline quinone + 2 H2O2 + 2 H2O + H(+). It functions in the pathway cofactor biosynthesis; pyrroloquinoline quinone biosynthesis. In terms of biological role, ring cyclization and eight-electron oxidation of 3a-(2-amino-2-carboxyethyl)-4,5-dioxo-4,5,6,7,8,9-hexahydroquinoline-7,9-dicarboxylic-acid to PQQ. The polypeptide is Pyrroloquinoline-quinone synthase (Ruegeria pomeroyi (strain ATCC 700808 / DSM 15171 / DSS-3) (Silicibacter pomeroyi)).